The chain runs to 598 residues: Aspartate--tRNA(Asp/Asn) ligase (598 aa).

E172 lines the L-aspartate pocket. The aspartate stretch occupies residues 196-199 (QLFK). R218 contacts L-aspartate. ATP contacts are provided by residues 218 to 220 (RDE) and Q227. H454 is an L-aspartate binding site. An ATP-binding site is contributed by E488. R495 lines the L-aspartate pocket. 540–543 (GLDR) serves as a coordination point for ATP.

Belongs to the class-II aminoacyl-tRNA synthetase family. Type 1 subfamily. As to quaternary structure, homodimer.

The protein resides in the cytoplasm. The catalysed reaction is tRNA(Asx) + L-aspartate + ATP = L-aspartyl-tRNA(Asx) + AMP + diphosphate. Its function is as follows. Aspartyl-tRNA synthetase with relaxed tRNA specificity since it is able to aspartylate not only its cognate tRNA(Asp) but also tRNA(Asn). Reaction proceeds in two steps: L-aspartate is first activated by ATP to form Asp-AMP and then transferred to the acceptor end of tRNA(Asp/Asn). The polypeptide is Aspartate--tRNA(Asp/Asn) ligase (Leptothrix cholodnii (strain ATCC 51168 / LMG 8142 / SP-6) (Leptothrix discophora (strain SP-6))).